The sequence spans 130 residues: Anti-adapter protein IraD (130 aa).

The protein belongs to the GpW/Gp25 family. IraD subfamily. As to quaternary structure, interacts with RssB.

Its subcellular location is the cytoplasm. Its function is as follows. Inhibits RpoS proteolysis by regulating RssB activity, thereby increasing the stability of the sigma stress factor RpoS during oxidative stress. Its effect on RpoS stability is due to its interaction with RssB, which probably blocks the interaction of RssB with RpoS, and the consequent delivery of the RssB-RpoS complex to the ClpXP protein degradation pathway. This Escherichia coli O45:K1 (strain S88 / ExPEC) protein is Anti-adapter protein IraD.